The primary structure comprises 190 residues: dTTP/UTP pyrophosphatase (190 aa).

Asp70 functions as the Proton acceptor in the catalytic mechanism.

It belongs to the Maf family. YhdE subfamily. A divalent metal cation is required as a cofactor.

The protein resides in the cytoplasm. The catalysed reaction is dTTP + H2O = dTMP + diphosphate + H(+). The enzyme catalyses UTP + H2O = UMP + diphosphate + H(+). Nucleoside triphosphate pyrophosphatase that hydrolyzes dTTP and UTP. May have a dual role in cell division arrest and in preventing the incorporation of modified nucleotides into cellular nucleic acids. This chain is dTTP/UTP pyrophosphatase, found in Paramagnetospirillum magneticum (strain ATCC 700264 / AMB-1) (Magnetospirillum magneticum).